Consider the following 70-residue polypeptide: Small ribosomal subunit protein bS21 (70 aa).

It belongs to the bacterial ribosomal protein bS21 family.

In Helicobacter acinonychis (strain Sheeba), this protein is Small ribosomal subunit protein bS21.